Reading from the N-terminus, the 534-residue chain is MKIAVEGCAHGELERIYDTIEGIEKVGGTKIDLLLCCGDFQSTRNLEDLQTMAVPKKYLDMCSFYKYYSGELVAPVLTIFIGGNHEASNYLQELPYGGWVAPNIYYLGYAGVVNVNGVRIAGISGIFKGHDFLRGHHEFPPYTDSTCRSVYHVRQLEVFRLKQISGRVDIFLSHDWPTGIYEYGNKAQLLRKKPFFAADMESGKLGSQPLEELLKAVQPAYWFAAHLHCKFAALVPHNHSQKLGDAESSSSSSSSEDEDEEREKVKKAAPVPPPSKSVPVTKFLALDKCLPRRAFLQVVEVPSDPIEGTPRLEYDAEWLAILHSTNHLISVKENYYYLPGKKAGEFTERSNFTPTEEELEAVTAKFQKLQVPENFERTVPAFDPAEQSDYKHMFVDQPKVQLNPQSNTFCATLGIDDPLCLVLLANGLDLPAVGATECKDRETKSSKLQAVEEDVAEPLVTPTKRKLNLSLPAPTTAAADTTDENVIDLPEEEAEEAIIATETPHVEEPASVPASPNVKKLKRRNQNIYQAQED.

Positions 8, 10, 39, and 84 each coordinate a divalent metal cation. The lariat recognition loop stretch occupies residues 124 to 154 (SGIFKGHDFLRGHHEFPPYTDSTCRSVYHVR). Residues H174, H226, and H228 each coordinate a divalent metal cation. Disordered stretches follow at residues 242–275 (KLGD…PPPS) and 501–534 (TETP…AQED).

The protein belongs to the lariat debranching enzyme family. It depends on Fe(2+) as a cofactor. The cofactor is Zn(2+). Requires Mn(2+) as cofactor.

It localises to the nucleus. Active in presence of diverse metals including Fe(2+), Zn(2+), Mn(2+). Binds two metal cations in two adjacent alpha and beta metal-binding pockets. In terms of biological role, cleaves the 2'-5' phosphodiester linkage at the branch point of lariat intron pre-mRNAs after splicing and converts them into linear molecules that are subsequently degraded. It thereby facilitates ribonucleotide turnover. In Drosophila melanogaster (Fruit fly), this protein is Lariat debranching enzyme (ldbr).